A 291-amino-acid chain; its full sequence is Diaminopimelate epimerase (291 aa).

The substrate site is built by Asn13, Gln46, and Asn66. Cys75 (proton donor) is an active-site residue. Substrate contacts are provided by residues 76-77 (GN), Asn156, Asn189, and 207-208 (ER). Cys216 acts as the Proton acceptor in catalysis. 217-218 (GS) is a substrate binding site.

Belongs to the diaminopimelate epimerase family. In terms of assembly, homodimer.

The protein resides in the cytoplasm. It carries out the reaction (2S,6S)-2,6-diaminopimelate = meso-2,6-diaminopimelate. The protein operates within amino-acid biosynthesis; L-lysine biosynthesis via DAP pathway; DL-2,6-diaminopimelate from LL-2,6-diaminopimelate: step 1/1. Functionally, catalyzes the stereoinversion of LL-2,6-diaminopimelate (L,L-DAP) to meso-diaminopimelate (meso-DAP), a precursor of L-lysine and an essential component of the bacterial peptidoglycan. The chain is Diaminopimelate epimerase from Rhodospirillum centenum (strain ATCC 51521 / SW).